Consider the following 78-residue polypeptide: Acyl carrier protein (78 aa).

One can recognise a Carrier domain in the interval Met-1 to Gly-76. At Ser-36 the chain carries O-(pantetheine 4'-phosphoryl)serine.

The protein belongs to the acyl carrier protein (ACP) family. In terms of processing, 4'-phosphopantetheine is transferred from CoA to a specific serine of apo-ACP by AcpS. This modification is essential for activity because fatty acids are bound in thioester linkage to the sulfhydryl of the prosthetic group.

Its subcellular location is the cytoplasm. Its pathway is lipid metabolism; fatty acid biosynthesis. In terms of biological role, carrier of the growing fatty acid chain in fatty acid biosynthesis. In Bdellovibrio bacteriovorus (strain ATCC 15356 / DSM 50701 / NCIMB 9529 / HD100), this protein is Acyl carrier protein.